Reading from the N-terminus, the 365-residue chain is Chorismate synthase (365 aa).

R48 and R54 together coordinate NADP(+). Residues 125–127 (RSS), 238–239 (NA), G278, 293–297 (KPTSS), and R319 each bind FMN.

This sequence belongs to the chorismate synthase family. As to quaternary structure, homotetramer. FMNH2 serves as cofactor.

The enzyme catalyses 5-O-(1-carboxyvinyl)-3-phosphoshikimate = chorismate + phosphate. Its pathway is metabolic intermediate biosynthesis; chorismate biosynthesis; chorismate from D-erythrose 4-phosphate and phosphoenolpyruvate: step 7/7. Catalyzes the anti-1,4-elimination of the C-3 phosphate and the C-6 proR hydrogen from 5-enolpyruvylshikimate-3-phosphate (EPSP) to yield chorismate, which is the branch point compound that serves as the starting substrate for the three terminal pathways of aromatic amino acid biosynthesis. This reaction introduces a second double bond into the aromatic ring system. This Janthinobacterium sp. (strain Marseille) (Minibacterium massiliensis) protein is Chorismate synthase.